We begin with the raw amino-acid sequence, 290 residues long: Eukaryotic translation initiation factor 3 subunit F-2 (290 aa).

The 139-residue stretch at 12–150 (VRLQPLVLFQ…TRLYCGVTMG (139 aa)) folds into the MPN domain.

It belongs to the eIF-3 subunit F family. As to quaternary structure, component of the eukaryotic translation initiation factor 3 (eIF-3) complex. The eIF-3 complex interacts with pix.

Its subcellular location is the cytoplasm. Component of the eukaryotic translation initiation factor 3 (eIF-3) complex, which is involved in protein synthesis of a specialized repertoire of mRNAs and, together with other initiation factors, stimulates binding of mRNA and methionyl-tRNAi to the 40S ribosome. The eIF-3 complex specifically targets and initiates translation of a subset of mRNAs involved in cell proliferation. The polypeptide is Eukaryotic translation initiation factor 3 subunit F-2 (Drosophila virilis (Fruit fly)).